The chain runs to 341 residues: MNIEEFDYDLPESLIAQTPLKDRDHSRLLVMDRETGEMKHLHFKDIIEYFRPGDTLVLNDTRVMPARLFGLKEETGAKVEMLMLTQIEGNDWEVLLKPAKRIKVGNKLNFGNGKIIAECIKEMDQGGRIMRLHYEGILQERLDELGEMPLPPYIKERLDDPDRYQTVYAKESGSAAAPTAGLHFTDELLTEIKNKGVNIAFVTLHVGLGTFRPVSVDDVNDHEMHSEYYQMTQETADLLNDTKSKGHRIISVGTTSTRTLETIRRDHDKFVETSGWTNIFIYPGFDFKAIDGQITNFHLPKSTLVMLVSAFSTRENVLNAYKTAVNLEYRFFSFGDAMLII.

The protein belongs to the QueA family. Monomer.

Its subcellular location is the cytoplasm. It catalyses the reaction 7-aminomethyl-7-carbaguanosine(34) in tRNA + S-adenosyl-L-methionine = epoxyqueuosine(34) in tRNA + adenine + L-methionine + 2 H(+). It functions in the pathway tRNA modification; tRNA-queuosine biosynthesis. Transfers and isomerizes the ribose moiety from AdoMet to the 7-aminomethyl group of 7-deazaguanine (preQ1-tRNA) to give epoxyqueuosine (oQ-tRNA). This chain is S-adenosylmethionine:tRNA ribosyltransferase-isomerase, found in Staphylococcus aureus (strain Mu3 / ATCC 700698).